Consider the following 597-residue polypeptide: Membrane protein insertase YidC (597 aa).

A helical membrane pass occupies residues 8 to 28 (YFVAIALSVLILIAWQFFYVS). The interval 38–75 (AEKAQQAQSQPGTQQAAPGQAAPGQALPGGAIPSAAES) is disordered. Low complexity predominate over residues 41–70 (AQQAQSQPGTQQAAPGQAAPGQALPGGAIP). Helical transmembrane passes span 372-392 (LFGN…LIFF), 446-466 (WPIL…YVTI), 491-511 (LFGL…WPIV), and 535-555 (FTWM…GLVI).

It belongs to the OXA1/ALB3/YidC family. Type 1 subfamily. In terms of assembly, interacts with the Sec translocase complex via SecD. Specifically interacts with transmembrane segments of nascent integral membrane proteins during membrane integration.

It localises to the cell inner membrane. Its function is as follows. Required for the insertion and/or proper folding and/or complex formation of integral membrane proteins into the membrane. Involved in integration of membrane proteins that insert both dependently and independently of the Sec translocase complex, as well as at least some lipoproteins. Aids folding of multispanning membrane proteins. This is Membrane protein insertase YidC from Sinorhizobium medicae (strain WSM419) (Ensifer medicae).